Reading from the N-terminus, the 164-residue chain is Pyruvoyl-dependent arginine decarboxylase (164 aa).

Position 52 is a pyruvic acid (Ser) (S52).

This sequence belongs to the PdaD family. It depends on pyruvate as a cofactor.

The catalysed reaction is L-arginine + H(+) = agmatine + CO2. This is Pyruvoyl-dependent arginine decarboxylase from Methanococcus maripaludis (strain C5 / ATCC BAA-1333).